We begin with the raw amino-acid sequence, 444 residues long: Nuclear distribution protein nudF (444 aa).

The LisH domain maps to 9–41 (QAEALHKAMLAYLSVINAPQTAETLREELHFDE). The stretch at 60-88 (TGIARLQRRINDLEAEVRSLQAELEASPS) forms a coiled coil. The segment at 83–107 (LEASPSAARAKNQDPTNWLPKPSST) is disordered. WD repeat units follow at residues 112-153 (SHRD…RTLK), 155-195 (HIRG…ANIR), 199-239 (GHDH…CVKV), 243-282 (ATES…PKAA), 285-345 (GHEN…IKTL), 347-386 (GHDN…RLVK), and 391-437 (AHEH…GCAD).

Belongs to the WD repeat LIS1/nudF family. In terms of assembly, interacts with dynein. Self-associates. Interacts with bnfA, nudC and nudE.

It localises to the cytoplasm. The protein resides in the cytoskeleton. Its subcellular location is the spindle pole. Positively regulates the activity of the minus-end directed microtubule motor protein dynein. May enhance dynein-mediated microtubule sliding by targeting dynein to the microtubule plus end. Required for nuclear migration during vegetative growth as well as development. Required for retrograde early endosome (EE) transport from the hyphal tip. Required for localization of dynein to the mitotic spindle poles. Recruits additional proteins to the dynein complex at SPBs. The sequence is that of Nuclear distribution protein nudF from Emericella nidulans (strain FGSC A4 / ATCC 38163 / CBS 112.46 / NRRL 194 / M139) (Aspergillus nidulans).